Here is a 400-residue protein sequence, read N- to C-terminus: Elongation factor Tu (400 aa).

The tr-type G domain maps to 10–209; the sequence is KPHVNIGTIG…VVDKYIPTPQ (200 aa). A G1 region spans residues 19–26; sequence GHVDHGKT. 19–26 lines the GTP pocket; that stretch reads GHVDHGKT. Thr26 is a binding site for Mg(2+). A G2 region spans residues 60–64; it reads GITIN. The tract at residues 81–84 is G3; the sequence is DCPG. GTP is bound by residues 81–85 and 136–139; these read DCPGH and NKVD. The segment at 136 to 139 is G4; sequence NKVD. Residues 174-176 are G5; sequence SAL.

This sequence belongs to the TRAFAC class translation factor GTPase superfamily. Classic translation factor GTPase family. EF-Tu/EF-1A subfamily. As to quaternary structure, monomer.

It localises to the cytoplasm. It carries out the reaction GTP + H2O = GDP + phosphate + H(+). Functionally, GTP hydrolase that promotes the GTP-dependent binding of aminoacyl-tRNA to the A-site of ribosomes during protein biosynthesis. This chain is Elongation factor Tu, found in Caldicellulosiruptor saccharolyticus (strain ATCC 43494 / DSM 8903 / Tp8T 6331).